We begin with the raw amino-acid sequence, 519 residues long: Membrane-bound glycerophospholipid O-acyltransferase 2 (519 aa).

6 consecutive transmembrane segments (helical) span residues 22-42 (PIDQ…AVWF), 61-81 (TLLG…HFLV), 88-108 (CIMI…FALG), 184-204 (FMGI…FIEG), 236-256 (LLVC…LPVE), and 288-305 (YFAW…GFGF). Catalysis depends on residues N341 and H372. Transmembrane regions (helical) follow at residues 365 to 385 (FFLS…FLTG), 415 to 435 (IITW…FVLL), and 443 to 463 (FYRS…LLLP).

Belongs to the membrane-bound acyltransferase family.

Its subcellular location is the endoplasmic reticulum membrane. It catalyses the reaction a 1-acyl-sn-glycero-3-phosphocholine + an acyl-CoA = a 1,2-diacyl-sn-glycero-3-phosphocholine + CoA. It carries out the reaction a 1-acyl-sn-glycero-3-phosphoethanolamine + an acyl-CoA = a 1,2-diacyl-sn-glycero-3-phosphoethanolamine + CoA. The enzyme catalyses a 1-acyl-sn-glycero-3-phosphate + an acyl-CoA = a 1,2-diacyl-sn-glycero-3-phosphate + CoA. The catalysed reaction is (9Z)-hexadecenoyl-CoA + 1-hexadecanoyl-sn-glycero-3-phosphocholine = 1-hexadecanoyl-2-(9Z-hexadecenoyl)-sn-glycero-3-phosphocholine + CoA. It catalyses the reaction 1-hexadecanoyl-sn-glycero-3-phosphoethanolamine + (9Z)-octadecenoyl-CoA = 1-hexadecanoyl-2-(9Z-octadecenoyl)-sn-glycero-3-phosphoethanolamine + CoA. It carries out the reaction 1-hexadecanoyl-sn-glycero-3-phosphoethanolamine + (9Z)-hexadecenoyl-CoA = 1-hexadecanoyl-2-(9Z)-hexadecenoyl-sn-glycero-3-phosphoethanolamine + CoA. The enzyme catalyses 1-(9Z-octadecenoyl)-sn-glycero-3-phospho-L-serine + hexadecanoyl-CoA = 1-(9Z)-octadecenoyl-2-hexadecanoyl-sn-glycero-3-phosphoserine + CoA. The catalysed reaction is (9Z,12Z)-octadecadienoyl-CoA + 1-hexadecanoyl-sn-glycero-3-phosphocholine = 1-hexadecanoyl-2-(9Z,12Z-octadecadienoyl)-sn-glycero-3-phosphocholine + CoA. It catalyses the reaction 1-hexadecanoyl-sn-glycero-3-phosphocholine + (9Z)-octadecenoyl-CoA = 1-hexadecanoyl-2-(9Z-octadecenoyl)-sn-glycero-3-phosphocholine + CoA. It carries out the reaction 1-hexadecanoyl-sn-glycero-3-phosphate + (9Z)-hexadecenoyl-CoA = 1-hexadecanoyl-2-[(9Z)-hexadec-9-enoyl]-sn-glycero-3-phosphate + CoA. The enzyme catalyses 1-hexadecanoyl-sn-glycero-3-phosphate + (9Z)-octadecenoyl-CoA = 1-hexadecanoyl-2-(9Z-octadecenoyl)-sn-glycero-3-phosphate + CoA. The catalysed reaction is a 1-O-(1Z-alkenyl)-sn-glycero-3-phosphocholine + (9Z)-octadecenoyl-CoA = 1-O-(1Z)-alkenyl-2-(9Z)-octadecenoyl-sn-glycero-3-phosphocholine + CoA. It catalyses the reaction a 1-O-(1Z-alkenyl)-sn-glycero-3-phosphoethanolamine + (9Z)-octadecenoyl-CoA = 1-O-(1Z)-alkenyl-2-(9Z)-octadecenoyl-sn-glycero-3-phosphoethanolamine + CoA. It carries out the reaction 1-octadecanoyl-sn-glycero-3-phosphoethanolamine + (9Z)-octadecenoyl-CoA = 1-octadecanoyl-2-(9Z-octadecenoyl)-sn-glycero-3-phosphoethanolamine + CoA. The enzyme catalyses 1-octadecanoyl-sn-glycero-3-phosphocholine + (9Z)-octadecenoyl-CoA = 1-octadecanoyl-2-(9Z-octadecenoyl)-sn-glycero-3-phosphocholine + CoA. The catalysed reaction is 1-(9Z-octadecenoyl)-sn-glycero-3-phosphoethanolamine + (9Z)-octadecenoyl-CoA = 1,2-di-(9Z-octadecenoyl)-sn-glycero-3-phosphoethanolamine + CoA. It participates in lipid metabolism; phospholipid metabolism. Partially inhibited by thimerosal. Its function is as follows. Acyltransferase which catalyzes the transfer of an acyl group from an acyl-CoA to a lysophospholipid leading to the production of a phospholipid and participates in the reacylation step of the phospholipid remodeling pathway also known as the Lands cycle. May catalyze preferentially the acylation of lysophosphatidylethanolamine (1-acyl-sn-glycero-3-phosphoethanolamine or LPE) and lysophosphatidic acid (LPA) and to a lesser extend lysophosphatidylcholine (LPC) and lysophosphatidylserine (LPS). Prefers oleoyl-CoA as the acyl donor. May be involved in chondrocyte differentiation. In Rattus norvegicus (Rat), this protein is Membrane-bound glycerophospholipid O-acyltransferase 2.